Reading from the N-terminus, the 241-residue chain is MSDGLQRCFVLHRRPYSESSLILDVFSEEYGRVTLMAKGARGKRSNLKGALQPFTPLLLKWSGNGSMKTLRQAEPISLGLPLSGVYLYSAMYINELVDRVLMPEVASPGLFHDYLFALTELAQSTNPEPALRRFELALLAAMGYGVDFLHCAGTGEPVSPDMTYRYREQKGFIASVRRDNLTFLGNELIAISERRFTSKEQLQAAKRFTRLALKPYLGGKPLKSRELFRQTTLPRARSTEE.

It belongs to the RecO family.

Functionally, involved in DNA repair and RecF pathway recombination. This chain is DNA repair protein RecO, found in Vibrio cholerae serotype O1 (strain ATCC 39541 / Classical Ogawa 395 / O395).